The chain runs to 140 residues: Ribosome maturation factor RimP (140 aa).

It belongs to the RimP family.

The protein localises to the cytoplasm. Required for maturation of 30S ribosomal subunits. The polypeptide is Ribosome maturation factor RimP (Campylobacter jejuni subsp. jejuni serotype O:23/36 (strain 81-176)).